The sequence spans 99 residues: Malonate decarboxylase acyl carrier protein (99 aa).

Ser25 is subject to O-(phosphoribosyl dephospho-coenzyme A)serine.

Belongs to the MdcC family. Covalently binds the prosthetic group of malonate decarboxylase.

The protein localises to the cytoplasm. Subunit of malonate decarboxylase, it is an acyl carrier protein to which acetyl and malonyl thioester residues are bound via a 2'-(5''-phosphoribosyl)-3'-dephospho-CoA prosthetic group and turn over during the catalytic mechanism. The sequence is that of Malonate decarboxylase acyl carrier protein from Pseudomonas fluorescens (strain SBW25).